The chain runs to 305 residues: UDP-3-O-acyl-N-acetylglucosamine deacetylase (305 aa).

Residues His-78, His-237, and Asp-241 each contribute to the Zn(2+) site. The active-site Proton donor is the His-264.

This sequence belongs to the LpxC family. The cofactor is Zn(2+).

The catalysed reaction is a UDP-3-O-[(3R)-3-hydroxyacyl]-N-acetyl-alpha-D-glucosamine + H2O = a UDP-3-O-[(3R)-3-hydroxyacyl]-alpha-D-glucosamine + acetate. Its pathway is glycolipid biosynthesis; lipid IV(A) biosynthesis; lipid IV(A) from (3R)-3-hydroxytetradecanoyl-[acyl-carrier-protein] and UDP-N-acetyl-alpha-D-glucosamine: step 2/6. Its function is as follows. Catalyzes the hydrolysis of UDP-3-O-myristoyl-N-acetylglucosamine to form UDP-3-O-myristoylglucosamine and acetate, the committed step in lipid A biosynthesis. This chain is UDP-3-O-acyl-N-acetylglucosamine deacetylase, found in Burkholderia lata (strain ATCC 17760 / DSM 23089 / LMG 22485 / NCIMB 9086 / R18194 / 383).